We begin with the raw amino-acid sequence, 277 residues long: Diaminopimelate epimerase (277 aa).

Substrate-binding residues include Asn13, Gln46, and Asn66. The Proton donor role is filled by Cys75. Residues 76–77, Asn159, Asn192, and 210–211 each bind substrate; these read GN and ER. Cys219 functions as the Proton acceptor in the catalytic mechanism. 220 to 221 serves as a coordination point for substrate; it reads GT.

The protein belongs to the diaminopimelate epimerase family. In terms of assembly, homodimer.

It is found in the cytoplasm. It carries out the reaction (2S,6S)-2,6-diaminopimelate = meso-2,6-diaminopimelate. It participates in amino-acid biosynthesis; L-lysine biosynthesis via DAP pathway; DL-2,6-diaminopimelate from LL-2,6-diaminopimelate: step 1/1. Catalyzes the stereoinversion of LL-2,6-diaminopimelate (L,L-DAP) to meso-diaminopimelate (meso-DAP), a precursor of L-lysine and an essential component of the bacterial peptidoglycan. This chain is Diaminopimelate epimerase, found in Azoarcus sp. (strain BH72).